A 429-amino-acid chain; its full sequence is Adenylosuccinate synthetase (429 aa).

Residues G13–K19 and G41–T43 each bind GTP. D14 (proton acceptor) is an active-site residue. Residues D14 and G41 each coordinate Mg(2+). IMP is bound by residues D14–K17, N39–H42, T130, R144, Q225, T240, and R304. The active-site Proton donor is H42. Residue A300–R306 participates in substrate binding. Residues R306, K332–D334, and S413–G415 each bind GTP.

It belongs to the adenylosuccinate synthetase family. In terms of assembly, homodimer. Mg(2+) is required as a cofactor.

Its subcellular location is the cytoplasm. The enzyme catalyses IMP + L-aspartate + GTP = N(6)-(1,2-dicarboxyethyl)-AMP + GDP + phosphate + 2 H(+). It functions in the pathway purine metabolism; AMP biosynthesis via de novo pathway; AMP from IMP: step 1/2. Functionally, plays an important role in the de novo pathway of purine nucleotide biosynthesis. Catalyzes the first committed step in the biosynthesis of AMP from IMP. The protein is Adenylosuccinate synthetase of Pseudomonas fluorescens (strain SBW25).